The primary structure comprises 590 residues: Keratin, type II cytoskeletal 5 (590 aa).

A compositionally biased stretch (low complexity) spans 1–18; it reads MSRQSSVSFRSGGSRSFS. A disordered region spans residues 1–20; it reads MSRQSSVSFRSGGSRSFSTA. Residues 1–167 form a head region; sequence MSRQSSVSFR…DPSIQRVRTE (167 aa). Phosphoserine is present on residues Ser-5, Ser-8, Ser-16, and Ser-21. A Phosphothreonine; by CDK1 modification is found at Thr-24. Phosphoserine occurs at positions 26, 36, 50, 64, 71, 75, and 82. Thr-151 carries the post-translational modification Phosphothreonine; by CDK1. Residues 168–203 form a coil 1A region; the sequence is EREQIKTLNNKFASFIDKVRFLEQQNKVLDTKWTLL. The IF rod domain maps to 168–481; that stretch reads EREQIKTLNN…KLLEGEECRL (314 aa). Residues 204–222 are linker 1; the sequence is QEQGTKTVRQNLEPLFEQY. The coil 1B stretch occupies residues 223–315; sequence INNLRRQLDS…FFDAELSQMQ (93 aa). Residues 316-338 form a linker 12 region; the sequence is THVSDTSVVLSMDNNRNLDLDSI. A coil 2 region spans residues 339-477; sequence IAEVKAQYEE…ATYRKLLEGE (139 aa). Residues 478–590 are tail; it reads ECRLSGEGVG…TSSSRKSFKS (113 aa). Residues 566 to 590 are disordered; sequence GSGGGSSSSVKFVSTTSSSRKSFKS. The segment covering 572-590 has biased composition (low complexity); sequence SSSVKFVSTTSSSRKSFKS.

Belongs to the intermediate filament family. Heterodimer of a type I and a type II keratin. Heterodimer with type I keratin KRT25 leading to the formation of keratin intermediate filament (KIF) network. Forms a heterodimer (via 2B domains) with KRT14 (via 2B domains). Interacts with PLEC isoform 1C, when in a heterodimer with KRT14. Interacts with TCHP. Interacts with EPPK1. Interacts with AMELX. Interacts with PKP1 (via N-terminus) and PKP2. Phosphorylated by CDK1, AURKB and Rho-kinase, phosphorylation is regulated by the cell cycle. Thr-24 phosphorylation, mediated by CDK1, peaks during prometaphase or metaphase cells with phosphorylated filamentous structures evident throughout the cytoplasm during early mitosis. CDK1 phosphorylates Thr-24 in mitotic cells at the site of injury. In terms of processing, O-glycosylated. Expressed in corneal epithelium (at protein level). Expressed in keratinocytes (at protein level).

The protein localises to the cytoplasm. Required for the formation of keratin intermediate filaments in the basal epidermis and maintenance of the skin barrier in response to mechanical stress. Regulates the recruitment of Langerhans cells to the epidermis, potentially by modulation of the abundance of macrophage chemotactic cytokines, macrophage inflammatory cytokines and CTNND1 localization in keratinocytes. This is Keratin, type II cytoskeletal 5 (KRT5) from Homo sapiens (Human).